The primary structure comprises 238 residues: 1-(5-phosphoribosyl)-5-[(5-phosphoribosylamino)methylideneamino] imidazole-4-carboxamide isomerase (238 aa).

Residue aspartate 8 is the Proton acceptor of the active site. Aspartate 129 (proton donor) is an active-site residue.

It belongs to the HisA/HisF family.

It is found in the cytoplasm. The catalysed reaction is 1-(5-phospho-beta-D-ribosyl)-5-[(5-phospho-beta-D-ribosylamino)methylideneamino]imidazole-4-carboxamide = 5-[(5-phospho-1-deoxy-D-ribulos-1-ylimino)methylamino]-1-(5-phospho-beta-D-ribosyl)imidazole-4-carboxamide. The protein operates within amino-acid biosynthesis; L-histidine biosynthesis; L-histidine from 5-phospho-alpha-D-ribose 1-diphosphate: step 4/9. The chain is 1-(5-phosphoribosyl)-5-[(5-phosphoribosylamino)methylideneamino] imidazole-4-carboxamide isomerase from Clostridium novyi (strain NT).